The chain runs to 329 residues: BTB/POZ domain-containing adapter for CUL3-mediated RhoA degradation protein 1 (329 aa).

Residues 1 to 31 (MSAEASGPAPAAAECLESPSPSSVEPGSPSY) are disordered. The 69-residue stretch at 41–109 (KYVKLNVGGS…LRDGSVPLPE (69 aa)) folds into the BTB domain.

Belongs to the BACURD family. As to quaternary structure, homotetramer; forms a two-fold symmetric tetramer in solution. Interacts with CUL3; interaction is direct and forms a 5:5 heterodecamer. Component of the BCR(KCTD13) E3 ubiquitin ligase complex, at least composed of CUL3, KCTD13/BACURD1 and RBX1. Interacts with RHOA; with a preference for RhoA-GDP. Interacts with POLD2 and PCNA. Interacts with SPRTN.

It is found in the nucleus. Its pathway is protein modification; protein ubiquitination. Its function is as follows. Substrate-specific adapter of a BCR (BTB-CUL3-RBX1) E3 ubiquitin-protein ligase complex required for synaptic transmission. The BCR(KCTD13) E3 ubiquitin ligase complex mediates the ubiquitination of RHOA, leading to its degradation by the proteasome, thereby regulating the actin cytoskeleton and promoting synaptic transmission. This Mus musculus (Mouse) protein is BTB/POZ domain-containing adapter for CUL3-mediated RhoA degradation protein 1 (Kctd13).